A 189-amino-acid polypeptide reads, in one-letter code: FUN14 domain-containing protein 2 (189 aa).

Residues 1–80 (METSAPRAGS…GQESGPSAEK (80 aa)) are Cytoplasmic-facing. Serine 10 and serine 53 each carry phosphoserine. Residues 81–101 (YSVATQLFIGGVTGWCTGFIF) traverse the membrane as a helical segment. Residues 102–107 (QKVGKL) are Mitochondrial intermembrane-facing. Residues 108-128 (AATAVGGGFFLLQLANHTGYI) traverse the membrane as a helical segment. Residues 129-164 (KVDWQRVEKDMKKAKEQLKIRKSNQIPTEVRSKAEE) are Cytoplasmic-facing. Position 151 is a phosphoserine (serine 151). The helical transmembrane segment at 165-185 (VVSFVKKNVLVTGGFFGGFLL) threads the bilayer. Topologically, residues 186 to 189 (GMAS) are mitochondrial intermembrane.

This sequence belongs to the FUN14 family. As to expression, highly expressed in platelets (at protein level).

The protein localises to the mitochondrion outer membrane. It localises to the nucleus. Binds directly and specifically 1,2-Diacyl-sn-glycero-3-phospho-(1'-myo-inositol-3',4',5'-bisphosphate) (PIP3) leading to the recruitment of PIP3 to mitochondria and may play a role in the regulation of the platelet activation via AKT/GSK3B/cGMP signaling pathways. May act as transcription factor that regulates SREBP1 (isoform SREBP-1C) expression in order to modulate triglyceride (TG) homeostasis in hepatocytes. The chain is FUN14 domain-containing protein 2 from Homo sapiens (Human).